Reading from the N-terminus, the 287-residue chain is 4-hydroxybenzoate octaprenyltransferase (287 aa).

The next 9 membrane-spanning stretches (helical) occupy residues 19-39, 43-63, 94-114, 118-138, 142-162, 167-187, 209-229, 235-255, and 263-283; these read PIGT…ASSG, LQML…GCAI, VVVA…LNIF, LSVL…FLAI, VLGI…LDFI, WVLF…YAMV, VLAI…VAHL, YFLI…KLVS, and FLAF…IVLG.

Belongs to the UbiA prenyltransferase family. It depends on Mg(2+) as a cofactor.

The protein resides in the cell inner membrane. It catalyses the reaction all-trans-octaprenyl diphosphate + 4-hydroxybenzoate = 4-hydroxy-3-(all-trans-octaprenyl)benzoate + diphosphate. Its pathway is cofactor biosynthesis; ubiquinone biosynthesis. Functionally, catalyzes the prenylation of para-hydroxybenzoate (PHB) with an all-trans polyprenyl group. Mediates the second step in the final reaction sequence of ubiquinone-8 (UQ-8) biosynthesis, which is the condensation of the polyisoprenoid side chain with PHB, generating the first membrane-bound Q intermediate 3-octaprenyl-4-hydroxybenzoate. The protein is 4-hydroxybenzoate octaprenyltransferase of Polynucleobacter asymbioticus (strain DSM 18221 / CIP 109841 / QLW-P1DMWA-1) (Polynucleobacter necessarius subsp. asymbioticus).